The following is a 308-amino-acid chain: Probable GTP 3',8-cyclase (308 aa).

Residues 4–224 enclose the Radical SAM core domain; that stretch reads RFGRPLEDLR…QIRKKHFRPR (221 aa). R13 contacts GTP. C20, C24, and C27 together coordinate [4Fe-4S] cluster. K60 contacts GTP. G64 provides a ligand contact to S-adenosyl-L-methionine. Residue T90 coordinates GTP. Residue S114 participates in S-adenosyl-L-methionine binding. K151 serves as a coordination point for GTP. Residues C245 and C248 each contribute to the [4Fe-4S] cluster site. 250 to 252 is a GTP binding site; it reads RIR. Residue C262 coordinates [4Fe-4S] cluster.

The protein belongs to the radical SAM superfamily. MoaA family. Requires [4Fe-4S] cluster as cofactor.

It catalyses the reaction GTP + AH2 + S-adenosyl-L-methionine = (8S)-3',8-cyclo-7,8-dihydroguanosine 5'-triphosphate + 5'-deoxyadenosine + L-methionine + A + H(+). It functions in the pathway cofactor biosynthesis; molybdopterin biosynthesis. In terms of biological role, catalyzes the cyclization of GTP to (8S)-3',8-cyclo-7,8-dihydroguanosine 5'-triphosphate. This Saccharolobus islandicus (strain L.S.2.15 / Lassen #1) (Sulfolobus islandicus) protein is Probable GTP 3',8-cyclase.